The chain runs to 462 residues: Bifunctional dihydrofolate reductase-thymidylate synthase (462 aa).

Positions 6-165 constitute a DHFR domain; sequence TFSMVLAMTL…INYDYQHLIN (160 aa). Val10 lines the substrate pocket. Residues Ala12 and 18 to 24 contribute to the NADP(+) site; that span reads GIGYQNR. Residue Asp32 coordinates substrate. NADP(+) is bound by residues 49–51 and 68–71; these read RKT and ISKN. Ile101 is a substrate binding site. 102–109 is a binding site for NADP(+); it reads GGKRIFEE. Thr122 contributes to the substrate binding site. The thymidylate synthase stretch occupies residues 180–462; that stretch reads ENQYLDMITK…HDKIEMKMAV (283 aa). DUMP is bound at residue Arg200. Residue Cys345 is part of the active site. Residues His346, 364–368, Asn376, and 406–408 each bind dUMP; these read QRSCD and HIY.

This sequence in the N-terminal section; belongs to the dihydrofolate reductase family. In the C-terminal section; belongs to the thymidylate synthase family.

It carries out the reaction (6S)-5,6,7,8-tetrahydrofolate + NADP(+) = 7,8-dihydrofolate + NADPH + H(+). The enzyme catalyses dUMP + (6R)-5,10-methylene-5,6,7,8-tetrahydrofolate = 7,8-dihydrofolate + dTMP. The protein operates within cofactor biosynthesis; tetrahydrofolate biosynthesis; 5,6,7,8-tetrahydrofolate from 7,8-dihydrofolate: step 1/1. Functionally, bifunctional enzyme. Involved in de novo dTMP biosynthesis. Key enzyme in folate metabolism. Catalyzes an essential reaction for de novo glycine and purine synthesis, DNA precursor synthesis, and for the conversion of dUMP to dTMP. In Paramecium tetraurelia, this protein is Bifunctional dihydrofolate reductase-thymidylate synthase.